A 351-amino-acid chain; its full sequence is Alternative oxidase, mitochondrial (351 aa).

The helical transmembrane segment at 147-167 threads the bilayer; that stretch reads LTRFIFLESVAGVPGMVGGML. Residues E154, E193, and H196 each contribute to the Fe cation site. Residues 212–232 traverse the membrane as a helical segment; it reads LMVLGAQGVFFNGFFLSYLMS. 4 residues coordinate Fe cation: E244, E245, E299, and H302. A disordered region spans residues 322-351; it reads AAKYKDPTKAHPNKGIADLKPTGWEREEVI.

The protein belongs to the alternative oxidase family. It depends on Fe cation as a cofactor.

It localises to the mitochondrion inner membrane. Functionally, catalyzes cyanide-resistant oxygen consumption. May increase respiration when the cytochrome respiratory pathway is restricted, or in response to low temperatures. This Aspergillus niger protein is Alternative oxidase, mitochondrial (aox1).